The sequence spans 263 residues: Indole-3-glycerol phosphate synthase (263 aa).

It belongs to the TrpC family.

The enzyme catalyses 1-(2-carboxyphenylamino)-1-deoxy-D-ribulose 5-phosphate + H(+) = (1S,2R)-1-C-(indol-3-yl)glycerol 3-phosphate + CO2 + H2O. The protein operates within amino-acid biosynthesis; L-tryptophan biosynthesis; L-tryptophan from chorismate: step 4/5. The sequence is that of Indole-3-glycerol phosphate synthase from Polaromonas naphthalenivorans (strain CJ2).